A 1067-amino-acid chain; its full sequence is SURP and G-patch domain-containing protein 2 (1067 aa).

Position 93 is a phosphoserine (S93). Residues 177–189 (KESRDYDLDHPGE) show a composition bias toward basic and acidic residues. The tract at residues 177–199 (KESRDYDLDHPGEVDSVSRSSGQ) is disordered. At S206 the chain carries Phosphoserine. Residue K219 forms a Glycyl lysine isopeptide (Lys-Gly) (interchain with G-Cter in SUMO2) linkage. T265 is subject to Phosphothreonine. S267 and S586 each carry phosphoserine. The SURP motif 1 repeat unit spans residues 573-616 (IDQLVMRVIQGRLSPRERTLLLQDPAYWFLSDESSLEYKYYKLK). Residues 668-767 (SQGPRGLKAK…CPSANMDAKT (100 aa)) form a disordered region. The span at 680-691 (TTAQQTSLSSGT) shows a compositional bias: polar residues. Residue S740 is modified to Phosphoserine. A Phosphothreonine modification is found at T744. An SURP motif 2 repeat occupies 770–813 (TAEKLARFVAQVGPEIEQFSIENSTDNPDLWFLHDQSSSAFKFY). The segment covering 825–840 (SFQSTGEAGDSVQSPT) has biased composition (polar residues). Disordered regions lie at residues 825-944 (SFQS…KSLK) and 967-991 (RIAY…EFSQ). S838 bears the Phosphoserine mark. Basic and acidic residues predominate over residues 843 to 856 (KEGKGEPQEGHPEQ). Positions 866-883 (LPEEEEEDEEESEDEGGE) are enriched in acidic residues. Residues 919-931 (ASTPGLSQASSGS) show a composition bias toward polar residues. Over residues 975 to 984 (GRPIAKKKKP) the composition is skewed to basic residues. Residues 980-985 (KKKKPK) carry the Nuclear localization signal motif. A G-patch domain is found at 996–1042 (DKNVGFQMLQKMGWKEGHGLGSLGKGIREPVSVGALSEGEGLGADGP).

It localises to the nucleus. May play a role in mRNA splicing. The polypeptide is SURP and G-patch domain-containing protein 2 (Sugp2) (Mus musculus (Mouse)).